An 873-amino-acid polypeptide reads, in one-letter code: DNA mismatch repair protein MutS (873 aa).

An ATP-binding site is contributed by 625–632 (GPNMGGKS).

The protein belongs to the DNA mismatch repair MutS family.

In terms of biological role, this protein is involved in the repair of mismatches in DNA. It is possible that it carries out the mismatch recognition step. This protein has a weak ATPase activity. This Xanthomonas campestris pv. campestris (strain 8004) protein is DNA mismatch repair protein MutS.